The sequence spans 1483 residues: Neuropathy target esterase sws (1483 aa).

Residues 1–34 are Lumenal-facing; the sequence is MDVLELLRASANGCYNTLFSDAWFQYVSKQIATT. A helical membrane pass occupies residues 35–55; sequence MYWYGALLVIGVLFIAWFLYF. The Cytoplasmic portion of the chain corresponds to 56-1483; that stretch reads KRLARLRLRD…ENLTKTDTKN (1428 aa). An a nucleoside 3',5'-cyclic phosphate-binding site is contributed by 174 to 301; that stretch reads IFGHFEKPIF…IRVIQVIMIR (128 aa). Disordered regions lie at residues 348–380 and 404–440; these read ASRPVVRAPTSPNSRLSREEHTLSDPDPNPNAN and SSAVSVNQAGTRRSSTTYGPSGESPNGNANTAPGTSI. Polar residues predominate over residues 413–440; sequence GTRRSSTTYGPSGESPNGNANTAPGTSI. Phosphoserine occurs at positions 418 and 424. Residues 456–585 and 574–701 contribute to the a nucleoside 3',5'-cyclic phosphate site; these read ELGL…VVRR and IVLD…LSHR. Positions 927 to 1093 constitute a PNPLA domain; sequence LVLGGGGARG…VNNLPGHLWR (167 aa). Positions 931-936 match the GXGXXG motif; it reads GGGARG. The GXSXG signature appears at 958–962; that stretch reads GVSIG. The active-site Nucleophile is the Ser-960. The active-site Proton acceptor is the Asp-1080. The short motif at 1080 to 1082 is the DGA/G element; that stretch reads DGG. Ser-1174 bears the Phosphoserine mark. A disordered region spans residues 1349 to 1483; the sequence is DKATQSTPPT…ENLTKTDTKN (135 aa). Residues 1351–1373 show a composition bias toward polar residues; it reads ATQSTPPTPNKQHALSPTSSQTN. Positions 1382–1396 are enriched in basic and acidic residues; sequence KPKEKQPSYDKLDRE. Over residues 1410–1419 the composition is skewed to low complexity; that stretch reads ERSSMQQRDS. A compositionally biased stretch (basic and acidic residues) spans 1445–1458; that stretch reads LNKPEQQPEQKPVP. Positions 1465-1474 are enriched in low complexity; it reads QKQQDQQQQE.

It belongs to the NTE family. In terms of assembly, interacts with Pka-C3; interaction inhibits the catalytic function of Pka-C3 and the esterase activity of sws.

Its subcellular location is the endoplasmic reticulum membrane. The catalysed reaction is a 1-acyl-sn-glycero-3-phosphocholine + H2O = sn-glycerol 3-phosphocholine + a fatty acid + H(+). In terms of biological role, phospholipase B that deacylates intracellular phosphatidylcholine (PtdCho), generating glycerophosphocholine (GroPtdCho). This deacylation occurs at both sn-2 and sn-1 positions of PtdCho. Its specific chemical modification by certain organophosphorus (OP) compounds leads to distal axonopathy. Plays a role in the signaling mechanism between neurons and glia that regulates glia wrapping during development of the adult brain. Essential for membrane lipid homeostasis and cell survival in both neurons and glia of the adult brain. The polypeptide is Neuropathy target esterase sws (Drosophila virilis (Fruit fly)).